The sequence spans 232 residues: UPF0502 protein Aave_3438 (232 aa).

The protein belongs to the UPF0502 family.

The polypeptide is UPF0502 protein Aave_3438 (Paracidovorax citrulli (strain AAC00-1) (Acidovorax citrulli)).